Here is a 315-residue protein sequence, read N- to C-terminus: Transmembrane protein 231 (315 aa).

Residues 23–43 traverse the membrane as a helical segment; sequence AALFLLLTTALTYIPPLLVAF. 3 N-linked (GlcNAc...) asparagine glycosylation sites follow: N194, N199, and N221. Residues 262 to 282 traverse the membrane as a helical segment; it reads FWEMIKFAWIQYVSILLIFLW.

It belongs to the TMEM231 family. Part of the tectonic-like complex (also named B9 complex). Interacts with TMEM107.

Its subcellular location is the cell projection. It is found in the cilium membrane. Functionally, transmembrane component of the tectonic-like complex, a complex localized at the transition zone of primary cilia and acting as a barrier that prevents diffusion of transmembrane proteins between the cilia and plasma membranes. Required for ciliogenesis and sonic hedgehog/SHH signaling. The protein is Transmembrane protein 231 (Tmem231) of Mus musculus (Mouse).